The primary structure comprises 489 residues: DNA-dependent metalloprotease SPRTN (489 aa).

At M1 the chain carries N-acetylmethionine. Positions 45 to 212 constitute a SprT-like domain; it reads LQALFVQFND…KTCGGTYIKI (168 aa). H111 provides a ligand contact to Zn(2+). Residue E112 is part of the active site. Zn(2+) is bound by residues H115 and H130. Residue K230 is modified to N6-acetyllysine. The short motif at 253 to 261 is the SHP-box element; sequence FSGKGYVLG. S268 is subject to Phosphoserine. K303 is covalently cross-linked (Glycyl lysine isopeptide (Lys-Gly) (interchain with G-Cter in SUMO2)). The PIP-box signature appears at 325–332; it reads QNVLSNYF. A Glycyl lysine isopeptide (Lys-Gly) (interchain with G-Cter in SUMO2); alternate cross-link involves residue K341. A Glycyl lysine isopeptide (Lys-Gly) (interchain with G-Cter in ubiquitin); alternate cross-link involves residue K341. Residues 357-409 form a disordered region; sequence GNIPKNSVSSSSQRRVSSSKISLRNSSKVTESASVMPSQDVSGSEDTFPNKRP. K361 is covalently cross-linked (Glycyl lysine isopeptide (Lys-Gly) (interchain with G-Cter in SUMO2)). Over residues 363–383 the composition is skewed to low complexity; that stretch reads SVSSSSQRRVSSSKISLRNSS. A phosphoserine; by CHEK1 mark is found at S373 and S374. Residue K376 forms a Glycyl lysine isopeptide (Lys-Gly) (interchain with G-Cter in SUMO2); alternate linkage. Residue K376 forms a Glycyl lysine isopeptide (Lys-Gly) (interchain with G-Cter in ubiquitin); alternate linkage. Residue S383 is modified to Phosphoserine; by CHEK1. Over residues 384–403 the composition is skewed to polar residues; the sequence is KVTESASVMPSQDVSGSEDT. Positions 402–413 match the Nuclear localization signal motif; the sequence is DTFPNKRPRLED. Residue K414 forms a Glycyl lysine isopeptide (Lys-Gly) (interchain with G-Cter in ubiquitin) linkage. Glycyl lysine isopeptide (Lys-Gly) (interchain with G-Cter in SUMO2) cross-links involve residues K423 and K424. Positions 428–453 are disordered; the sequence is KSSGNDPKYSTTTAQNSSSSSSQSKM. Residue K435 forms a Glycyl lysine isopeptide (Lys-Gly) (interchain with G-Cter in ubiquitin) linkage. Low complexity predominate over residues 437–451; sequence STTTAQNSSSSSSQS. The segment at 453 to 480 adopts a UBZ4-type zinc-finger fold; sequence MVNCPVCQNEVLESQINEHLDWCLEGDS. C456, C459, H471, and C475 together coordinate Zn(2+). K484 is covalently cross-linked (Glycyl lysine isopeptide (Lys-Gly) (interchain with G-Cter in SUMO2)).

The protein belongs to the Spartan family. Homodimer. Interacts (VIA PIP-box) with PCNA (when ubiquitinated). Interacts (via its SHP-box) with VCP/p97. Interacts with RAD18. Interacts with KCTD13 and POLD3. The cofactor is Zn(2+). Autocatalytically cleaved in response to double-stranded DNA-binding: autocatalytic cleavage takes place in trans and leads to inactivation. In terms of processing, monoubiquitinated; monoubiquitination promotes exclusion from chromatin. Deubiquitinated by VCPIP1: deubiquitination is required for subsequent acetylation and recruitment to chromatin and DNA damage sites. Post-translationally, acetylated following deubiquitination by VCPIP1, leading to recruitment to chromatin and DNA damage sites. Phosphorylation by CHEK1 promotes recruitment to chromatin.

The protein resides in the nucleus. Its subcellular location is the chromosome. Its activity is regulated as follows. DNA-binding activates the protease activity: single-stranded DNA-binding specifically activates ability to cleave covalent DNA-protein cross-links (DPCs). In contrast, double-stranded DNA-binding specifically activates autocatalytic cleavage, and subsequent inactivation. In terms of biological role, DNA-dependent metalloendopeptidase that mediates the proteolytic cleavage of covalent DNA-protein cross-links (DPCs) during DNA synthesis, thereby playing a key role in maintaining genomic integrity. DPCs are highly toxic DNA lesions that interfere with essential chromatin transactions, such as replication and transcription, and which are induced by reactive agents, such as UV light or formaldehyde. Associates with the DNA replication machinery and specifically removes DPCs during DNA synthesis. Catalyzes proteolytic cleavage of the HMCES DNA-protein cross-link following unfolding by the BRIP1/FANCJ helicase. Acts as a pleiotropic protease for DNA-binding proteins cross-linked with DNA, such as TOP1, TOP2A, histones H3 and H4. Mediates degradation of DPCs that are not ubiquitinated, while it is not able to degrade ubiquitinated DPCs. SPRTN activation requires polymerase collision with DPCs followed by helicase bypass of DPCs. Involved in recruitment of VCP/p97 to sites of DNA damage. Also acts as an activator of CHEK1 during normal DNA replication by mediating proteolytic cleavage of CHEK1, thereby promoting CHEK1 removal from chromatin and subsequent activation. Does not activate CHEK1 in response to DNA damage. May also act as a 'reader' of ubiquitinated PCNA: recruited to sites of UV damage and interacts with ubiquitinated PCNA and RAD18, the E3 ubiquitin ligase that monoubiquitinates PCNA. Facilitates chromatin association of RAD18 and is required for efficient PCNA monoubiquitination, promoting a feed-forward loop to enhance PCNA ubiquitination and translesion DNA synthesis. This Homo sapiens (Human) protein is DNA-dependent metalloprotease SPRTN.